Reading from the N-terminus, the 238-residue chain is 2,3-bisphosphoglycerate-dependent phosphoglycerate mutase (238 aa).

Residues 8–15, 21–22, Arg60, 86–89, Lys97, 113–114, and 182–183 contribute to the substrate site; these read RHGQSEWN, TG, ERHY, RR, and GN. His9 (tele-phosphohistidine intermediate) is an active-site residue. The active-site Proton donor/acceptor is Glu86.

Belongs to the phosphoglycerate mutase family. BPG-dependent PGAM subfamily. In terms of assembly, homodimer.

It carries out the reaction (2R)-2-phosphoglycerate = (2R)-3-phosphoglycerate. The protein operates within carbohydrate degradation; glycolysis; pyruvate from D-glyceraldehyde 3-phosphate: step 3/5. Its function is as follows. Catalyzes the interconversion of 2-phosphoglycerate and 3-phosphoglycerate. In Pelagibacter ubique (strain HTCC1062), this protein is 2,3-bisphosphoglycerate-dependent phosphoglycerate mutase.